The chain runs to 402 residues: UDP-N-acetylmuramoylalanine--D-glutamate ligase (402 aa).

97–103 (GTNGKTT) is an ATP binding site.

The protein belongs to the MurCDEF family.

It is found in the cytoplasm. It catalyses the reaction UDP-N-acetyl-alpha-D-muramoyl-L-alanine + D-glutamate + ATP = UDP-N-acetyl-alpha-D-muramoyl-L-alanyl-D-glutamate + ADP + phosphate + H(+). The protein operates within cell wall biogenesis; peptidoglycan biosynthesis. Cell wall formation. Catalyzes the addition of glutamate to the nucleotide precursor UDP-N-acetylmuramoyl-L-alanine (UMA). The polypeptide is UDP-N-acetylmuramoylalanine--D-glutamate ligase (Campylobacter jejuni subsp. jejuni serotype O:6 (strain 81116 / NCTC 11828)).